The chain runs to 360 residues: Photosystem II protein D1 (360 aa).

3 helical membrane-spanning segments follow: residues 30-47 (YVGWFGVLMIPCLLTAAA), 119-134 (HFLIGISAYMGRQWEL), and 143-157 (WICVAYSAPVSAAFA). His119 contributes to the chlorophyll a binding site. Residue Tyr127 coordinates pheophytin a. Positions 171 and 190 each coordinate [CaMn4O5] cluster. A helical transmembrane segment spans residues 198–219 (FHMAGVAGMFGGSLFSAMHGSL). His199 contributes to the chlorophyll a binding site. A quinone-binding positions include His216 and 265–266 (SF). His216 is a Fe cation binding site. Residue His273 participates in Fe cation binding. Residues 275–289 (FLAVFPVVCVWLTSM) traverse the membrane as a helical segment. Positions 333, 334, 343, and 345 each coordinate [CaMn4O5] cluster. Positions 346 to 360 (AAESTTVALSAPAIG) are excised as a propeptide.

Belongs to the reaction center PufL/M/PsbA/D family. In terms of assembly, PSII is composed of 1 copy each of membrane proteins PsbA, PsbB, PsbC, PsbD, PsbE, PsbF, PsbH, PsbI, PsbJ, PsbK, PsbL, PsbM, PsbT, PsbX, PsbY, Psb30/Ycf12, peripheral proteins PsbO, CyanoQ (PsbQ), PsbU, PsbV and a large number of cofactors. It forms dimeric complexes. The D1/D2 heterodimer binds P680, chlorophylls that are the primary electron donor of PSII, and subsequent electron acceptors. It shares a non-heme iron and each subunit binds pheophytin, quinone, additional chlorophylls, carotenoids and lipids. D1 provides most of the ligands for the Mn4-Ca-O5 cluster of the oxygen-evolving complex (OEC). There is also a Cl(-1) ion associated with D1 and D2, which is required for oxygen evolution. The PSII complex binds additional chlorophylls, carotenoids and specific lipids. serves as cofactor. Post-translationally, tyr-162 forms a radical intermediate that is referred to as redox-active TyrZ, YZ or Y-Z. C-terminally processed by CtpA; processing is essential to allow assembly of the oxygen-evolving complex and thus photosynthetic growth.

It localises to the cellular thylakoid membrane. It catalyses the reaction 2 a plastoquinone + 4 hnu + 2 H2O = 2 a plastoquinol + O2. In terms of biological role, photosystem II (PSII) is a light-driven water:plastoquinone oxidoreductase that uses light energy to abstract electrons from H(2)O, generating O(2) and a proton gradient subsequently used for ATP formation. It consists of a core antenna complex that captures photons, and an electron transfer chain that converts photonic excitation into a charge separation. The D1/D2 (PsbA/PsbD) reaction center heterodimer binds P680, the primary electron donor of PSII as well as several subsequent electron acceptors. The protein is Photosystem II protein D1 of Prochlorococcus marinus (strain MIT 9301).